Here is a 317-residue protein sequence, read N- to C-terminus: Egg-laying defective protein 26 (317 aa).

In terms of domain architecture, LRAT spans 156-277; that stretch reads EVNVSGVKFY…CSTGVPFSYD (122 aa). Active-site residues include His166 and His178. Catalysis depends on Cys261, which acts as the Acyl-thioester intermediate.

In terms of tissue distribution, highly expressed in the cells of the spermatheca, the mouth, and the lining of the pharynx, the rectum, and the excretory canal. Also expressed in the pharyngeal intestinal junction cell.

It is found in the apical cell membrane. Its function is as follows. Putative acyltransferase. Plays a role in the morphogenesis of a vulval toroid cell, vulF, which is located where the vulva and the uterus connect. Not required for specifying vulval cell fate. This is Egg-laying defective protein 26 from Caenorhabditis elegans.